We begin with the raw amino-acid sequence, 340 residues long: Phosphoribosylformylglycinamidine cyclo-ligase (340 aa).

The protein belongs to the AIR synthase family.

The protein localises to the cytoplasm. It carries out the reaction 2-formamido-N(1)-(5-O-phospho-beta-D-ribosyl)acetamidine + ATP = 5-amino-1-(5-phospho-beta-D-ribosyl)imidazole + ADP + phosphate + H(+). Its pathway is purine metabolism; IMP biosynthesis via de novo pathway; 5-amino-1-(5-phospho-D-ribosyl)imidazole from N(2)-formyl-N(1)-(5-phospho-D-ribosyl)glycinamide: step 2/2. The sequence is that of Phosphoribosylformylglycinamidine cyclo-ligase from Acetivibrio thermocellus (strain ATCC 27405 / DSM 1237 / JCM 9322 / NBRC 103400 / NCIMB 10682 / NRRL B-4536 / VPI 7372) (Clostridium thermocellum).